The following is a 191-amino-acid chain: dTTP/UTP pyrophosphatase (191 aa).

The active-site Proton acceptor is the aspartate 70.

This sequence belongs to the Maf family. YhdE subfamily. The cofactor is a divalent metal cation.

Its subcellular location is the cytoplasm. The catalysed reaction is dTTP + H2O = dTMP + diphosphate + H(+). It carries out the reaction UTP + H2O = UMP + diphosphate + H(+). Functionally, nucleoside triphosphate pyrophosphatase that hydrolyzes dTTP and UTP. May have a dual role in cell division arrest and in preventing the incorporation of modified nucleotides into cellular nucleic acids. The sequence is that of dTTP/UTP pyrophosphatase from Clostridium novyi (strain NT).